A 156-amino-acid polypeptide reads, in one-letter code: Ribosomal RNA large subunit methyltransferase H (156 aa).

Residues Leu73, Gly104, and 123–128 (LSPLTL) contribute to the S-adenosyl-L-methionine site.

The protein belongs to the RNA methyltransferase RlmH family. Homodimer.

It localises to the cytoplasm. It catalyses the reaction pseudouridine(1915) in 23S rRNA + S-adenosyl-L-methionine = N(3)-methylpseudouridine(1915) in 23S rRNA + S-adenosyl-L-homocysteine + H(+). In terms of biological role, specifically methylates the pseudouridine at position 1915 (m3Psi1915) in 23S rRNA. The polypeptide is Ribosomal RNA large subunit methyltransferase H (Pseudoalteromonas atlantica (strain T6c / ATCC BAA-1087)).